We begin with the raw amino-acid sequence, 578 residues long: Tetratricopeptide repeat protein 39A (578 aa).

TPR repeat units follow at residues 280–313 (AIFLFFAGRIEAIKGNIDAAVRRFEECCEAQQHW), 470–503 (CLVKLLKGLCLKYLGRIQEAEENFRSISANEKKI), and 511–544 (PNALLELALLFMEQGRNEEAIKLLESAKQNYKNY).

It belongs to the TTC39 family.

The polypeptide is Tetratricopeptide repeat protein 39A (Ttc39a) (Mus musculus (Mouse)).